The sequence spans 824 residues: Disintegrin and metalloproteinase domain-containing protein 8 (824 aa).

The signal sequence occupies residues 1 to 16 (MRGLGLWLLGAMMLPA). Over 17 to 655 (IAPSRPWALM…EVHAASGSLP (639 aa)) the chain is Extracellular. N-linked (GlcNAc...) asparagine glycans are attached at residues Asn67 and Asn91. Residues 200-400 (RYVELYVVVD…PQSVCLANAP (201 aa)) form the Peptidase M12B domain. 12 disulfides stabilise this stretch: Cys310/Cys395, Cys351/Cys379, Cys353/Cys362, Cys435/Cys457, Cys448/Cys454, Cys466/Cys486, Cys473/Cys503, Cys498/Cys508, Cys566/Cys613, Cys613/Cys623, Cys617/Cys629, and Cys631/Cys640. A Zn(2+)-binding site is contributed by His334. Residue Glu335 is part of the active site. 2 residues coordinate Zn(2+): His338 and His344. The Disintegrin domain occupies 408–494 (GPVCGNLFVE…ECPEDAFQEN (87 aa)). Residue Asn436 is glycosylated (N-linked (GlcNAc...) asparagine). The EGF-like domain maps to 609–641 (RSSNCSAQCHNHGVCNHKQECHCHAGWAPPHCA). A glycan (N-linked (GlcNAc...) asparagine) is linked at Asn612. A helical membrane pass occupies residues 656 to 676 (VFVVVVLVLLAVVLVTLAGII). Residues 677 to 824 (VYRKARSRIL…KQGAGAPTAP (148 aa)) lie on the Cytoplasmic side of the membrane. Disordered stretches follow at residues 710–756 (VPAK…PVTV) and 776–824 (KPTF…PTAP). Positions 747–756 (RPPPAPPVTV) are enriched in pro residues. Positions 788–804 (PGAGAANPGPAEGAVGP) are enriched in low complexity.

Interacts with FST3. The cofactor is Zn(2+). As to expression, expressed on neutrophils and monocytes.

It is found in the membrane. In terms of biological role, possible involvement in extravasation of leukocytes. The protein is Disintegrin and metalloproteinase domain-containing protein 8 (ADAM8) of Homo sapiens (Human).